A 150-amino-acid polypeptide reads, in one-letter code: Endoribonuclease YbeY (150 aa).

Zn(2+) is bound by residues His108, His112, and His118.

It belongs to the endoribonuclease YbeY family. Zn(2+) serves as cofactor.

It is found in the cytoplasm. Its function is as follows. Single strand-specific metallo-endoribonuclease involved in late-stage 70S ribosome quality control and in maturation of the 3' terminus of the 16S rRNA. This is Endoribonuclease YbeY from Methylococcus capsulatus (strain ATCC 33009 / NCIMB 11132 / Bath).